A 921-amino-acid polypeptide reads, in one-letter code: MDYKDTLFLPTTDFAMRGNLPQNEPKRFKAWYNERKVYEKMKAKRQSAGVSFNLHDGPPYANGHLHIGHALNKILKDIIVKTHYFAGENVRYVPGWDCHGLPIEQQIEIKLGGKKNETSKTKIREMCRAHAREFINIQRDEFKDMGIIGDWDDPYITMKFKFEAEIYKGLCEIAKKGLLIERSKPVFWSWAAGSALAEAEVEYKDKEDYSIYIAFDLSDEANKKIGAKGAKAVIWTTTPWTIPANQAICLNPDEIYVLTSENFIFAKHLLENLVQKGISKGKIVKEFASGELENLYAKNPLNDRPSKFILGEHVLMDGGTGLVHTAPGHGEDDYYVSLKYGIETIMPVDDAGKYDETIKTKKLFRDNVVDEFVGMHIFKANEKIVELLGDAVVSVGKFTHSYPYCWRTHKPVIYRATKQWFIAMDKPFKDGKTLREVALNALKEVKFYPEVGRNRITSMIENRPDWCISRQRDWGVPIAFFRDKATKEPIFDDEILNNIYEIFKEKGADAWWELDIGELLPKNCKYEAKNLEKVVDILDVWFDSGSTWRAVLKSGDYDAGEFRADMYLEGSDQHRGWFQSSLLVSSAINETAPYKSILTHGFTVDEKGQKMSKSVGNVIAPQEVAKKYGVEIMRLWVGLSDYSSDLKISDNILKQVSEQYRKIRNTIRFLLANVSDLKEIETNNFTMLDKWILSKANIAFEETNRAFRNYDFSKGFSVLLNFLSADLSGIYLDVCKDRLYCDELDSSRRRSAQSTMVLITRTLLPLIAPTLTYTVDEVMEFAPEIVKNGKKDAFDLVYEPLEFEDFKKNETGELFIESRAKFFEIIDTLKKEKKIKSTLELVLETSSNEILSHDLDEICDWYMVSHMRSIESRDFLAEFKVEDETFRLVLSDHHKCPRCWKFDAKNEDELCPRCQKVLNVK.

A 'HIGH' region motif is present at residues 59–69 (PYANGHLHIGH). Glutamate 569 is an L-isoleucyl-5'-AMP binding site. Residues 610 to 614 (KMSKS) carry the 'KMSKS' region motif. Lysine 613 is an ATP binding site. Positions 896, 899, 911, and 914 each coordinate Zn(2+).

It belongs to the class-I aminoacyl-tRNA synthetase family. IleS type 1 subfamily. Monomer. The cofactor is Zn(2+).

Its subcellular location is the cytoplasm. The catalysed reaction is tRNA(Ile) + L-isoleucine + ATP = L-isoleucyl-tRNA(Ile) + AMP + diphosphate. In terms of biological role, catalyzes the attachment of isoleucine to tRNA(Ile). As IleRS can inadvertently accommodate and process structurally similar amino acids such as valine, to avoid such errors it has two additional distinct tRNA(Ile)-dependent editing activities. One activity is designated as 'pretransfer' editing and involves the hydrolysis of activated Val-AMP. The other activity is designated 'posttransfer' editing and involves deacylation of mischarged Val-tRNA(Ile). This is Isoleucine--tRNA ligase from Campylobacter hominis (strain ATCC BAA-381 / DSM 21671 / CCUG 45161 / LMG 19568 / NCTC 13146 / CH001A).